The following is a 231-amino-acid chain: Large ribosomal subunit protein uL1 (231 aa).

Belongs to the universal ribosomal protein uL1 family. In terms of assembly, part of the 50S ribosomal subunit.

Its function is as follows. Binds directly to 23S rRNA. The L1 stalk is quite mobile in the ribosome, and is involved in E site tRNA release. Protein L1 is also a translational repressor protein, it controls the translation of the L11 operon by binding to its mRNA. The protein is Large ribosomal subunit protein uL1 of Nitrosomonas eutropha (strain DSM 101675 / C91 / Nm57).